We begin with the raw amino-acid sequence, 118 residues long: UPF0251 protein TTE1845 (118 aa).

Belongs to the UPF0251 family.

In Caldanaerobacter subterraneus subsp. tengcongensis (strain DSM 15242 / JCM 11007 / NBRC 100824 / MB4) (Thermoanaerobacter tengcongensis), this protein is UPF0251 protein TTE1845.